The sequence spans 191 residues: Elongation factor P (191 aa).

Lysine 34 carries the N6-(3,6-diaminohexanoyl)-5-hydroxylysine modification.

The protein belongs to the elongation factor P family. May be beta-lysylated on the epsilon-amino group of Lys-34 by the combined action of EpmA and EpmB, and then hydroxylated on the C5 position of the same residue by EpmC (if this protein is present). Lysylation is critical for the stimulatory effect of EF-P on peptide-bond formation. The lysylation moiety may extend toward the peptidyltransferase center and stabilize the terminal 3-CCA end of the tRNA. Hydroxylation of the C5 position on Lys-34 may allow additional potential stabilizing hydrogen-bond interactions with the P-tRNA.

The protein resides in the cytoplasm. The protein operates within protein biosynthesis; polypeptide chain elongation. Involved in peptide bond synthesis. Alleviates ribosome stalling that occurs when 3 or more consecutive Pro residues or the sequence PPG is present in a protein, possibly by augmenting the peptidyl transferase activity of the ribosome. Modification of Lys-34 is required for alleviation. The chain is Elongation factor P from Colwellia psychrerythraea (strain 34H / ATCC BAA-681) (Vibrio psychroerythus).